The sequence spans 351 residues: Histidine-rich glycoprotein (351 aa).

The signal sequence occupies residues 1-23 (MFTSLKKVATFSFLVWISQYSGS). A propeptide spanning residues 24-47 (NSCSSSLVKHIPQTGSNLTFDRVL) is cleaved from the precursor. N40 is a glycosylation site (N-linked (GlcNAc...) asparagine). Positions 57–91 (LHEEHHHHHPEEHHEPHHEEHHHHHPEEHHEPHHE) are enriched in basic and acidic residues. The interval 57–351 (LHEEHHHHHP…DAHHHHHHHH (295 aa)) is disordered. A run of 6 repeats spans residues 59–74 (EEHHHHHPEEHHEPHH), 75–90 (EEHHHHHPEEHHEPHH), 91–107 (EEHHHHHPHPHHHHHHH), 108–123 (PPHHHHHLGHHHHHHH), 124–138 (AAHHHHHEEHHHHHH), and 139–153 (AAHHHHHEEHHHHHH). The segment at 59 to 90 (EEHHHHHPEEHHEPHHEEHHHHHPEEHHEPHH) is 2 X 16 AA tandem repeats. Residues 91 to 123 (EEHHHHHPHPHHHHHHHPPHHHHHLGHHHHHHH) form a 2 X 17 AA tandem repeats region. Residues 92 to 351 (EHHHHHPHPH…DAHHHHHHHH (260 aa)) show a composition bias toward basic residues. Residues 124-153 (AAHHHHHEEHHHHHHAAHHHHHEEHHHHHH) are 2 X 15 AA tandem repeats. Residues 173–351 (APHHHHHHHH…DAHHHHHHHH (179 aa)) form an 18 X 10 AA tandem repeats region.

The sequence is that of Histidine-rich glycoprotein from Plasmodium lophurae.